Here is a 508-residue protein sequence, read N- to C-terminus: Photosystem II CP47 reaction center protein (508 aa).

Helical transmembrane passes span 21 to 36, 101 to 115, 140 to 156, 203 to 218, 237 to 252, and 457 to 472; these read SVHI…WAGS, IVFS…IWHW, GIHL…SGAF, IAAG…FHLS, VLSS…AFIV, and TFAL…HGAR.

This sequence belongs to the PsbB/PsbC family. PsbB subfamily. As to quaternary structure, PSII is composed of 1 copy each of membrane proteins PsbA, PsbB, PsbC, PsbD, PsbE, PsbF, PsbH, PsbI, PsbJ, PsbK, PsbL, PsbM, PsbT, PsbX, PsbY, PsbZ, Psb30/Ycf12, at least 3 peripheral proteins of the oxygen-evolving complex and a large number of cofactors. It forms dimeric complexes. The cofactor is Binds multiple chlorophylls. PSII binds additional chlorophylls, carotenoids and specific lipids..

It is found in the plastid. Its subcellular location is the chloroplast thylakoid membrane. In terms of biological role, one of the components of the core complex of photosystem II (PSII). It binds chlorophyll and helps catalyze the primary light-induced photochemical processes of PSII. PSII is a light-driven water:plastoquinone oxidoreductase, using light energy to abstract electrons from H(2)O, generating O(2) and a proton gradient subsequently used for ATP formation. This Cycas taitungensis (Prince sago) protein is Photosystem II CP47 reaction center protein.